Here is a 250-residue protein sequence, read N- to C-terminus: PF03932 family protein CutC (250 aa).

It belongs to the CutC family.

The protein resides in the cytoplasm. The sequence is that of PF03932 family protein CutC from Vibrio vulnificus (strain YJ016).